Here is a 135-residue protein sequence, read N- to C-terminus: Protein PsiE homolog (135 aa).

A run of 4 helical transmembrane segments spans residues 14–34, 54–74, 82–102, and 107–127; these read LQTI…IFLV, YQLI…ALIV, HFPL…LIIV, and PSDT…LYLA.

Belongs to the PsiE family.

Its subcellular location is the cell inner membrane. This Pectobacterium atrosepticum (strain SCRI 1043 / ATCC BAA-672) (Erwinia carotovora subsp. atroseptica) protein is Protein PsiE homolog.